A 427-amino-acid polypeptide reads, in one-letter code: Serine--tRNA ligase (427 aa).

232 to 234 is an L-serine binding site; the sequence is TAE. 263 to 265 contacts ATP; it reads RSE. An L-serine-binding site is contributed by Glu-286. 350–353 contacts ATP; that stretch reads EISS. Ser-385 serves as a coordination point for L-serine.

Belongs to the class-II aminoacyl-tRNA synthetase family. Type-1 seryl-tRNA synthetase subfamily. In terms of assembly, homodimer. The tRNA molecule binds across the dimer.

Its subcellular location is the cytoplasm. It catalyses the reaction tRNA(Ser) + L-serine + ATP = L-seryl-tRNA(Ser) + AMP + diphosphate + H(+). The enzyme catalyses tRNA(Sec) + L-serine + ATP = L-seryl-tRNA(Sec) + AMP + diphosphate + H(+). Its pathway is aminoacyl-tRNA biosynthesis; selenocysteinyl-tRNA(Sec) biosynthesis; L-seryl-tRNA(Sec) from L-serine and tRNA(Sec): step 1/1. In terms of biological role, catalyzes the attachment of serine to tRNA(Ser). Is also able to aminoacylate tRNA(Sec) with serine, to form the misacylated tRNA L-seryl-tRNA(Sec), which will be further converted into selenocysteinyl-tRNA(Sec). The sequence is that of Serine--tRNA ligase from Aromatoleum aromaticum (strain DSM 19018 / LMG 30748 / EbN1) (Azoarcus sp. (strain EbN1)).